The chain runs to 480 residues: Glutamate--tRNA ligase (480 aa).

Positions 21-31 (PSPTGYLHVGG) match the 'HIGH' region motif. Zn(2+) is bound by residues Cys-110, Cys-112, Cys-137, and His-139. The 'KMSKS' region signature appears at 248 to 252 (KLSKR). An ATP-binding site is contributed by Lys-251.

Belongs to the class-I aminoacyl-tRNA synthetase family. Glutamate--tRNA ligase type 1 subfamily. In terms of assembly, monomer. Requires Zn(2+) as cofactor.

Its subcellular location is the cytoplasm. It carries out the reaction tRNA(Glu) + L-glutamate + ATP = L-glutamyl-tRNA(Glu) + AMP + diphosphate. Catalyzes the attachment of glutamate to tRNA(Glu) in a two-step reaction: glutamate is first activated by ATP to form Glu-AMP and then transferred to the acceptor end of tRNA(Glu). The chain is Glutamate--tRNA ligase from Histophilus somni (strain 129Pt) (Haemophilus somnus).